The following is a 101-amino-acid chain: Citrinin resistance protein, mitochondrial (101 aa).

Its subcellular location is the mitochondrion. Functionally, mitochondrial protein that is involved in citrinin resistance. The chain is Citrinin resistance protein, mitochondrial from Saccharomyces cerevisiae (strain ATCC 204508 / S288c) (Baker's yeast).